The sequence spans 438 residues: Xylose isomerase (438 aa).

Mg(2+) is bound by residues aspartate 306 and aspartate 308.

Belongs to the xylose isomerase family. As to quaternary structure, homotetramer. Requires Mg(2+) as cofactor.

Its subcellular location is the cytoplasm. The catalysed reaction is alpha-D-xylose = alpha-D-xylulofuranose. The sequence is that of Xylose isomerase from Pseudomonas fluorescens (strain SBW25).